A 573-amino-acid polypeptide reads, in one-letter code: MEEIRELVLKYALINAYTHRGKANPKAVIGKVLGENPELRKRAKEIIPLVNEVVNEVNSLSLEEQEAKLREIYPEFFEEKNEKKEEKKGLPPLPKAERGKVVTRFAPNPDGAFHLGNARAAILSHEYARMYDGKFILRFDDTDPKVKRPEPIFYEWIKEDLEWLGFRIDEIHIASDRLEIYYDYAEKLIKMGKAYVCTCPPEKFRELRDKGIACPHREEPVEVQLERWRKMLNGEYREGEAVVRIKTDLNHPNPAVRDWPALRIIDNPNHPRTGNKYRVWPLYNFASAIDDHELGVTHIFRGQEHAENETRQRYVYEYFGWEYPVTVHHGRLSIEGVILSKSKTRKGIEEGKYLGWDDPRLGTIRALRRRGIKPEAIRELIIEVGLKRSDTTISWDNLAAINRKIIEPIANRYFFVADPIPMYVEGAQEFTAEIPLHPDYPERGVRRLKFEPDKPVYVSKDDMELFKPGNFVRLKDLFNVEIMEVNENGIRARFHSFEYEVARENRWRMVHWVTEGKACEVWVPEGDELIIREGLLESDADVKVDDIVQFERFGFVRIDDVRPEKVVAIFAHK.

The 'HIGH' region motif lies at P107–N117.

This sequence belongs to the class-I aminoacyl-tRNA synthetase family. Glutamate--tRNA ligase type 2 subfamily.

Its subcellular location is the cytoplasm. The enzyme catalyses tRNA(Glu) + L-glutamate + ATP = L-glutamyl-tRNA(Glu) + AMP + diphosphate. Functionally, catalyzes the attachment of glutamate to tRNA(Glu) in a two-step reaction: glutamate is first activated by ATP to form Glu-AMP and then transferred to the acceptor end of tRNA(Glu). The chain is Glutamate--tRNA ligase from Thermococcus kodakarensis (strain ATCC BAA-918 / JCM 12380 / KOD1) (Pyrococcus kodakaraensis (strain KOD1)).